A 321-amino-acid polypeptide reads, in one-letter code: GDP-L-fucose synthase (321 aa).

14-20 (GGSGLVG) is a binding site for NADP(+). Tyr143 (proton donor/acceptor) is an active-site residue. NADP(+) is bound by residues Lys147, 170–173 (PTNV), and His186. Residues Lys194, Trp208, Arg215, and Asp277 each coordinate substrate.

The protein belongs to the NAD(P)-dependent epimerase/dehydratase family. Fucose synthase subfamily. As to quaternary structure, homodimer.

It carries out the reaction GDP-beta-L-fucose + NADP(+) = GDP-4-dehydro-alpha-D-rhamnose + NADPH + H(+). The protein operates within nucleotide-sugar biosynthesis; GDP-L-fucose biosynthesis via de novo pathway; GDP-L-fucose from GDP-alpha-D-mannose: step 2/2. Its function is as follows. Catalyzes the two-step NADP-dependent conversion of GDP-4-dehydro-6-deoxy-D-mannose to GDP-fucose, involving an epimerase and a reductase reaction. This Pongo abelii (Sumatran orangutan) protein is GDP-L-fucose synthase (GFUS).